We begin with the raw amino-acid sequence, 387 residues long: Testis-expressed protein 9 (387 aa).

2 disordered regions span residues 1–25 (MAGR…LAAG) and 58–133 (REQQ…LKYP). Polar residues-rich tracts occupy residues 70–91 (ALTT…SSEG) and 103–115 (KNTG…QNRL). A coiled-coil region spans residues 184–347 (IGTEAQIRFL…ERQKGELMIG (164 aa)).

Testis-specific.

It is found in the cytoplasm. The protein resides in the cytoskeleton. The protein localises to the microtubule organizing center. Its subcellular location is the centrosome. It localises to the centriolar satellite. This is Testis-expressed protein 9 (Tex9) from Mus musculus (Mouse).